Consider the following 199-residue polypeptide: MYETYHSGWIECITGSMFSGKSEELIRRLRRGIYAKQKVVVFKPAIDDRYHKEKVVSHNGNAIEAINISKASEIMTHNLTNVDVIGIDEVQFFDDEIVSIVEKLSADGHRVIVAGLDMDFRGEPFEPMPKLMAVSEQVTKLQAVCAVCGSSSSRTQRLINGKPAKIDDPIILVGANESYEPRCRAHHIVAPSDNNKEEL.

Residues 15 to 22 and 88 to 91 contribute to the ATP site; these read GSMFSGKS and DEVQ. Glu89 functions as the Proton acceptor in the catalytic mechanism. Residues Cys145, Cys148, Cys183, and His186 each coordinate Zn(2+).

This sequence belongs to the thymidine kinase family. As to quaternary structure, homotetramer.

It localises to the cytoplasm. It carries out the reaction thymidine + ATP = dTMP + ADP + H(+). The protein is Thymidine kinase of Staphylococcus aureus (strain Mu50 / ATCC 700699).